Here is a 116-residue protein sequence, read N- to C-terminus: Large ribosomal subunit protein bL17 (116 aa).

Belongs to the bacterial ribosomal protein bL17 family. Part of the 50S ribosomal subunit. Contacts protein L32.

This Deinococcus geothermalis (strain DSM 11300 / CIP 105573 / AG-3a) protein is Large ribosomal subunit protein bL17.